The primary structure comprises 137 residues: Small ribosomal subunit protein bS6 (137 aa).

Positions Glu113 to Lys137 are disordered. Positions Ile126 to Lys137 are enriched in basic and acidic residues.

It belongs to the bacterial ribosomal protein bS6 family.

Its function is as follows. Binds together with bS18 to 16S ribosomal RNA. This Mycoplasma capricolum subsp. capricolum (strain California kid / ATCC 27343 / NCTC 10154) protein is Small ribosomal subunit protein bS6.